The chain runs to 496 residues: MEFSVKSGNPEKQRSACVVVGVFDRRKLSSAARVLDKASGGALSTILRRGDMDGEKGQTLWLYNLPNTLCERVLLVGCGKERDFDEPAYRSVIATVARTVNKSGAVEAVNYLTDLPVKGRDTLWKISQAVTITQDSLYSFQQLKSKKEDTQRPLKRIILSVPSRADLLPGEDAVRVATAISVGTKLTRDLANLPGNICNPTYLAEQALQLKKTYKGLKVEILEEADMEKLGMGALLSVSRGSEQPAKLITLEYRGGRKDAKPVVLVGKGITFDTGGISLKPGAEMDEMKFDMCGAASVLGVMKAVAEMMLPINLVGVVAAAENMPDGKATRPGDVVTSMSGQTIEILNTDAEGRLVLCDALSYVERFDPDVVIDIATLTGACIIALGHQATGLLSNHSPLANDLLGAGKQSYDRAWELPLWDEYQEQLKSNFADMANIGGRPAGTITAACFLSRFTKKYKWAHLDIAGVAWKSGKEKGATGRPVPLLMQYLLNKAS.

Lys268 and Asp273 together coordinate Mn(2+). Lys280 is a catalytic residue. Residues Asp291, Asp350, and Glu352 each coordinate Mn(2+). Arg354 is an active-site residue.

It belongs to the peptidase M17 family. Mn(2+) serves as cofactor.

The protein resides in the cytoplasm. It carries out the reaction Release of an N-terminal amino acid, Xaa-|-Yaa-, in which Xaa is preferably Leu, but may be other amino acids including Pro although not Arg or Lys, and Yaa may be Pro. Amino acid amides and methyl esters are also readily hydrolyzed, but rates on arylamides are exceedingly low.. It catalyses the reaction Release of an N-terminal amino acid, preferentially leucine, but not glutamic or aspartic acids.. Presumably involved in the processing and regular turnover of intracellular proteins. Catalyzes the removal of unsubstituted N-terminal amino acids from various peptides. The polypeptide is Probable cytosol aminopeptidase (Thioalkalivibrio sulfidiphilus (strain HL-EbGR7)).